A 155-amino-acid chain; its full sequence is Cathelicidin-1 (155 aa).

Residues 1-29 (METQRASLSLGRCSLWLLLLGLALPSASA) form the signal peptide. Gln-30 carries the pyrrolidone carboxylic acid modification. Positions 30-143 (QVLSYREAVL…KQPWAPPQAA (114 aa)) are excised as a propeptide. 3 disulfides stabilise this stretch: Cys-85/Cys-96, Cys-107/Cys-124, and Cys-146/Cys-154.

Belongs to the cathelicidin family.

The protein resides in the secreted. In terms of biological role, potent microbicidal activity; active against S.aureus and E.coli. The polypeptide is Cathelicidin-1 (CATHL1A) (Ovis aries (Sheep)).